Consider the following 136-residue polypeptide: MLQPKRTKFRKMFKGRNRGLANGTEVSFGDFGLKAVGRGRLTARQIEAARRAMTRHIKRQGQIWIRVFPDKPITSKPLEVRMGKGKGNVEYWVCQIQPGKVLYEMDGVTEELAREAFALAAAKLPLKTTFVTKTVM.

This sequence belongs to the universal ribosomal protein uL16 family. In terms of assembly, part of the 50S ribosomal subunit.

Functionally, binds 23S rRNA and is also seen to make contacts with the A and possibly P site tRNAs. This is Large ribosomal subunit protein uL16 from Shewanella sediminis (strain HAW-EB3).